We begin with the raw amino-acid sequence, 450 residues long: Glucose-6-phosphate isomerase (450 aa).

Glu-290 acts as the Proton donor in catalysis. Active-site residues include His-311 and Lys-425.

This sequence belongs to the GPI family.

It localises to the cytoplasm. The enzyme catalyses alpha-D-glucose 6-phosphate = beta-D-fructose 6-phosphate. It functions in the pathway carbohydrate biosynthesis; gluconeogenesis. Its pathway is carbohydrate degradation; glycolysis; D-glyceraldehyde 3-phosphate and glycerone phosphate from D-glucose: step 2/4. Functionally, catalyzes the reversible isomerization of glucose-6-phosphate to fructose-6-phosphate. The polypeptide is Glucose-6-phosphate isomerase (Leuconostoc mesenteroides subsp. mesenteroides (strain ATCC 8293 / DSM 20343 / BCRC 11652 / CCM 1803 / JCM 6124 / NCDO 523 / NBRC 100496 / NCIMB 8023 / NCTC 12954 / NRRL B-1118 / 37Y)).